The following is a 280-amino-acid chain: Ribosomal RNA small subunit methyltransferase A (280 aa).

Residues Leu-24, Gly-49, Glu-70, Asp-95, and Asn-118 each coordinate S-adenosyl-L-methionine.

It belongs to the class I-like SAM-binding methyltransferase superfamily. rRNA adenine N(6)-methyltransferase family. RsmA subfamily.

The protein localises to the cytoplasm. It catalyses the reaction adenosine(1518)/adenosine(1519) in 16S rRNA + 4 S-adenosyl-L-methionine = N(6)-dimethyladenosine(1518)/N(6)-dimethyladenosine(1519) in 16S rRNA + 4 S-adenosyl-L-homocysteine + 4 H(+). Specifically dimethylates two adjacent adenosines (A1518 and A1519) in the loop of a conserved hairpin near the 3'-end of 16S rRNA in the 30S particle. May play a critical role in biogenesis of 30S subunits. The polypeptide is Ribosomal RNA small subunit methyltransferase A (Syntrophus aciditrophicus (strain SB)).